The chain runs to 233 residues: CDP-diacylglycerol--glycerol-3-phosphate 3-phosphatidyltransferase 2 (233 aa).

The tract at residues Met1–Arg23 is disordered. The next 5 helical transmembrane spans lie at Val40–Ala60, Thr71–Ala91, Phe100–Leu120, Met125–Ile145, and Leu201–Val221.

It belongs to the CDP-alcohol phosphatidyltransferase class-I family. Mn(2+) is required as a cofactor.

It is found in the microsome membrane. It localises to the endoplasmic reticulum membrane. The catalysed reaction is a CDP-1,2-diacyl-sn-glycerol + sn-glycerol 3-phosphate = a 1,2-diacyl-sn-glycero-3-phospho-(1'-sn-glycero-3'-phosphate) + CMP + H(+). It functions in the pathway phospholipid metabolism; phosphatidylglycerol biosynthesis; phosphatidylglycerol from CDP-diacylglycerol: step 1/2. Catalyzes the committed step to the synthesis of the acidic phospholipids, including phosphatidylglycerol (PG). Together with PGPS1, required for the proper embryo development by providing PG accurate levels. The protein is CDP-diacylglycerol--glycerol-3-phosphate 3-phosphatidyltransferase 2 of Arabidopsis thaliana (Mouse-ear cress).